We begin with the raw amino-acid sequence, 456 residues long: Phospholipase A1 member A (456 aa).

A signal peptide spans 1–24 (MCPGLWGTCFWLWGSLLWLSIGRS). Ser166 (nucleophile) is an active-site residue. Asp190 functions as the Charge relay system in the catalytic mechanism. The cysteines at positions 245 and 258 are disulfide-linked. The active-site Charge relay system is His260. 2 cysteine pairs are disulfide-bonded: Cys282–Cys293 and Cys296–Cys304. N-linked (GlcNAc...) asparagine glycosylation is present at Asn365.

This sequence belongs to the AB hydrolase superfamily. Lipase family.

It localises to the secreted. It catalyses the reaction a 1,2-diacyl-sn-glycero-3-phospho-L-serine + H2O = a 2-acyl-sn-glycero-3-phospho-L-serine + a fatty acid + H(+). It carries out the reaction 1,2-di-(9Z)-octadecenoyl-sn-glycero-3-phospho-L-serine + H2O = 2-(9Z-octadecenoyl)-sn-glycero-3-phospho-L-serine + (9Z)-octadecenoate + H(+). The enzyme catalyses 1-hexadecanoyl-2-(5Z,8Z,11Z,14Z-eicosatetraenoyl)-sn-glycero-3-phospho-L-serine + H2O = 2-(5Z,8Z,11Z,14Z)-eicosatetraenoyl-sn-glycero-3-phospho-L-serine + hexadecanoate + H(+). The catalysed reaction is a 1-acyl-sn-glycero-3-phospho-L-serine + H2O = sn-glycero-3-phospho-L-serine + a fatty acid + H(+). It catalyses the reaction 1-(9Z-octadecenoyl)-sn-glycero-3-phospho-L-serine + H2O = sn-glycero-3-phospho-L-serine + (9Z)-octadecenoate + H(+). Functionally, hydrolyzes the ester bond of the acyl group attached at the sn-1 position of phosphatidylserines (phospholipase A1 activity) and 1-acyl-2-lysophosphatidylserines (lysophospholipase activity) in the pathway of phosphatidylserines acyl chain remodeling. Cleaves phosphatidylserines exposed on the outer leaflet of the plasma membrane of apoptotic cells producing 2-acyl-1-lysophosphatidylserines, which in turn enhance mast cell activation and histamine production. Has no activity toward other glycerophospholipids including phosphatidylcholines, phosphatidylethanolamines, phosphatidic acids or phosphatidylinositols, or glycerolipids such as triolein. The protein is Phospholipase A1 member A of Rattus norvegicus (Rat).